We begin with the raw amino-acid sequence, 500 residues long: Aspartyl/glutamyl-tRNA(Asn/Gln) amidotransferase subunit B (500 aa).

The protein belongs to the GatB/GatE family. GatB subfamily. Heterotrimer of A, B and C subunits.

The enzyme catalyses L-glutamyl-tRNA(Gln) + L-glutamine + ATP + H2O = L-glutaminyl-tRNA(Gln) + L-glutamate + ADP + phosphate + H(+). The catalysed reaction is L-aspartyl-tRNA(Asn) + L-glutamine + ATP + H2O = L-asparaginyl-tRNA(Asn) + L-glutamate + ADP + phosphate + 2 H(+). Its function is as follows. Allows the formation of correctly charged Asn-tRNA(Asn) or Gln-tRNA(Gln) through the transamidation of misacylated Asp-tRNA(Asn) or Glu-tRNA(Gln) in organisms which lack either or both of asparaginyl-tRNA or glutaminyl-tRNA synthetases. The reaction takes place in the presence of glutamine and ATP through an activated phospho-Asp-tRNA(Asn) or phospho-Glu-tRNA(Gln). In Allorhizobium ampelinum (strain ATCC BAA-846 / DSM 112012 / S4) (Agrobacterium vitis (strain S4)), this protein is Aspartyl/glutamyl-tRNA(Asn/Gln) amidotransferase subunit B.